We begin with the raw amino-acid sequence, 232 residues long: Very-long-chain (3R)-3-hydroxyacyl-CoA dehydratase 4 (232 aa).

The Cytoplasmic segment spans residues Met1–Tyr19. Residues Leu20 to Val40 form a helical membrane-spanning segment. Residues Arg41–Ala56 are Lumenal-facing. The chain crosses the membrane as a helical span at residues Ile57 to Ile77. The Cytoplasmic segment spans residues Gly78 to Cys112. Residues Val113–Met133 traverse the membrane as a helical segment. The Lumenal portion of the chain corresponds to Leu134–Ser135. The helical transmembrane segment at Val136 to Tyr156 threads the bilayer. Tyr156 is an active-site residue. Position 157 (Pro157) is a topological domain, cytoplasmic. A helical membrane pass occupies residues Leu158 to Gly178. Glu163 is a catalytic residue. The Lumenal portion of the chain corresponds to Thr179–Ser189. The helical transmembrane segment at Thr190–Thr210 threads the bilayer. At Tyr211–Val232 the chain is on the cytoplasmic side.

It belongs to the very long-chain fatty acids dehydratase HACD family. In terms of assembly, may interact with enzymes of the ELO family (including ELOVL1); with those enzymes that mediate condensation, the first of the four steps of the reaction cycle responsible for fatty acids elongation, may be part of a larger fatty acids elongase complex.

It is found in the endoplasmic reticulum membrane. It catalyses the reaction a very-long-chain (3R)-3-hydroxyacyl-CoA = a very-long-chain (2E)-enoyl-CoA + H2O. It carries out the reaction (3R)-hydroxyhexadecanoyl-CoA = (2E)-hexadecenoyl-CoA + H2O. It participates in lipid metabolism; fatty acid biosynthesis. In terms of biological role, catalyzes the third of the four reactions of the long-chain fatty acids elongation cycle. This endoplasmic reticulum-bound enzymatic process, allows the addition of two carbons to the chain of long- and very long-chain fatty acids/VLCFAs per cycle. This enzyme catalyzes the dehydration of the 3-hydroxyacyl-CoA intermediate into trans-2,3-enoyl-CoA, within each cycle of fatty acid elongation. Thereby, it participates in the production of VLCFAs of different chain lengths that are involved in multiple biological processes as precursors of membrane lipids and lipid mediators. This is Very-long-chain (3R)-3-hydroxyacyl-CoA dehydratase 4 from Mus musculus (Mouse).